The following is a 395-amino-acid chain: Elongation factor Ts, mitochondrial (395 aa).

Residues 1-63 (MAFARAVRRP…RGFGNFIRSF (63 aa)) constitute a mitochondrion transit peptide.

This sequence belongs to the EF-Ts family.

It is found in the mitochondrion. Functionally, associates with the EF-Tu.GDP complex and induces the exchange of GDP to GTP. It remains bound to the aminoacyl-tRNA.EF-Tu.GTP complex up to the GTP hydrolysis stage on the ribosome. The protein is Elongation factor Ts, mitochondrial of Arabidopsis thaliana (Mouse-ear cress).